The following is a 434-amino-acid chain: Homogentisate 1,2-dioxygenase (434 aa).

His289 acts as the Proton acceptor in catalysis. 2 residues coordinate Fe cation: His332 and Glu338. 2 residues coordinate homogentisate: Tyr347 and His368. Residue His368 coordinates Fe cation.

Belongs to the homogentisate dioxygenase family. As to quaternary structure, hexamer; dimer of trimers. Requires Fe cation as cofactor.

It carries out the reaction homogentisate + O2 = 4-maleylacetoacetate + H(+). Its pathway is amino-acid degradation; L-phenylalanine degradation; acetoacetate and fumarate from L-phenylalanine: step 4/6. Its function is as follows. Involved in the catabolism of homogentisate (2,5-dihydroxyphenylacetate or 2,5-OH-PhAc), a central intermediate in the degradation of phenylalanine and tyrosine. Catalyzes the oxidative ring cleavage of the aromatic ring of homogentisate to yield maleylacetoacetate. In Pseudomonas syringae pv. syringae (strain B728a), this protein is Homogentisate 1,2-dioxygenase.